Consider the following 322-residue polypeptide: Probable heme-iron transport system permease protein IsdF (322 aa).

The next 9 helical transmembrane spans lie at 9 to 29, 61 to 81, 89 to 109, 114 to 134, 143 to 163, 179 to 199, 233 to 253, 267 to 287, and 294 to 314; these read LLFL…FVTG, ILIA…LQAA, ANII…MLFI, FYLP…IILL, VSMI…LEIL, IWSD…LTLL, VFLA…GIIV, VLIP…DLLG, and LEIP…IYLI.

Belongs to the binding-protein-dependent transport system permease family. FecCD subfamily.

The protein resides in the cell membrane. Its function is as follows. Part of the binding-protein-dependent transport system for heme-iron. Responsible for the translocation of the substrate across the membrane. In Staphylococcus aureus (strain Mu3 / ATCC 700698), this protein is Probable heme-iron transport system permease protein IsdF (isdF).